The primary structure comprises 308 residues: Porphobilinogen deaminase (308 aa).

At Cys243 the chain carries S-(dipyrrolylmethanemethyl)cysteine.

The protein belongs to the HMBS family. As to quaternary structure, monomer. Dipyrromethane serves as cofactor.

It catalyses the reaction 4 porphobilinogen + H2O = hydroxymethylbilane + 4 NH4(+). It participates in porphyrin-containing compound metabolism; protoporphyrin-IX biosynthesis; coproporphyrinogen-III from 5-aminolevulinate: step 2/4. Functionally, tetrapolymerization of the monopyrrole PBG into the hydroxymethylbilane pre-uroporphyrinogen in several discrete steps. This is Porphobilinogen deaminase from Mesorhizobium japonicum (strain LMG 29417 / CECT 9101 / MAFF 303099) (Mesorhizobium loti (strain MAFF 303099)).